A 452-amino-acid chain; its full sequence is MSETPAQCSIKQERISYTPPESPVPSYASSTPLHVPVPRALRMEEDSIRLPAHLRLQPMFWSRDDVAQWLKWAENEFSLRPIDSNTFEMNGKALLLLTKEDFRYRSPHSGDVLYELLQHILKQRKPRILFSPFFHPGNSIHTQQEVILHQNHEEDNGVQRTSRPSAENVHQNPPTIELLHRSRSPITTNHRPSPDPEQRPLRSPLDNMIRRLSPAERAQGPRLHQENNHQEPYPLSVSPMENNHCPPSSEPHPRPSSPRQEGTRVIQLMPSPIMHPLILNPRHSVDFKQPRLSEDGLHREGKPINLSHREDLAYMNHIMVSVSPPEEHAVPIGRIADCRLLWDYVYQLLSDSRYENFIRWEDKESKIFRIVDPNGLARLWGNHKNRTNMTYEKMSRALRHYYKLNIIRKEPGQRLLFRFMKTPDEIMSGRTDRLEHLESQELDEQIYQEDEC.

K11 carries the post-translational modification N6-acetyllysine; alternate. K11 is covalently cross-linked (Glycyl lysine isopeptide (Lys-Gly) (interchain with G-Cter in SUMO2); alternate). T18 is modified (phosphothreonine). The residue at position 22 (S22) is a Phosphoserine. In terms of domain architecture, PNT spans 40-124 (ALRMEEDSIR…ELLQHILKQR (85 aa)). Residues 154 to 262 (EDNGVQRTSR…PRPSSPRQEG (109 aa)) are disordered. The segment covering 158–174 (VQRTSRPSAENVHQNPP) has biased composition (polar residues). Residues S213, S238, and S257 each carry the phosphoserine modification. A Glycyl lysine isopeptide (Lys-Gly) (interchain with G-Cter in SUMO2) cross-link involves residue K288. An N6-acetyllysine; alternate modification is found at K302. K302 participates in a covalent cross-link: Glycyl lysine isopeptide (Lys-Gly) (interchain with G-Cter in SUMO2); alternate. S323 bears the Phosphoserine mark. Positions 339–420 (RLLWDYVYQL…PGQRLLFRFM (82 aa)) form a DNA-binding region, ETS. Residues K403 and K421 each participate in a glycyl lysine isopeptide (Lys-Gly) (interchain with G-Cter in SUMO2) cross-link.

This sequence belongs to the ETS family. Can form homodimers or heterodimers with TEL2 or FLI1. Interacts with L3MBTL1 and HDAC9.

It is found in the nucleus. Transcriptional repressor; binds to the DNA sequence 5'-CCGGAAGT-3'. Plays a role in hematopoiesis and malignant transformation. The sequence is that of Transcription factor ETV6 (ETV6) from Bos taurus (Bovine).